A 119-amino-acid polypeptide reads, in one-letter code: Beta-2-microglobulin (119 aa).

A signal peptide spans 1–20 (MARSVVVSLFVLLALAGLEA). The Ig-like C1-type domain occupies 25 to 114 (PKIQVYSRHP…VTFQTPKTVK (90 aa)).

This sequence belongs to the beta-2-microglobulin family. Heterodimer of an alpha chain and a beta chain. Beta-2-microglobulin is the beta-chain of major histocompatibility complex class I molecules.

It is found in the secreted. In terms of biological role, component of the class I major histocompatibility complex (MHC). Involved in the presentation of peptide antigens to the immune system. This is Beta-2-microglobulin (B2M) from Brachyteles arachnoides (Southern muriqui).